Reading from the N-terminus, the 227-residue chain is Ribose-5-phosphate isomerase A (227 aa).

Substrate is bound by residues 26–29, 82–85, and 95–98; these read TGST, DGAD, and KGGG. Residue Glu-104 is the Proton acceptor of the active site. Lys-122 contacts substrate.

Belongs to the ribose 5-phosphate isomerase family. Homodimer.

The catalysed reaction is aldehydo-D-ribose 5-phosphate = D-ribulose 5-phosphate. Its pathway is carbohydrate degradation; pentose phosphate pathway; D-ribose 5-phosphate from D-ribulose 5-phosphate (non-oxidative stage): step 1/1. Its function is as follows. Catalyzes the reversible conversion of ribose-5-phosphate to ribulose 5-phosphate. This Streptococcus equi subsp. equi (strain 4047) protein is Ribose-5-phosphate isomerase A.